The sequence spans 247 residues: Nodulation protein H (247 aa).

Positions 1 to 17 (MTHSTLPPQPFAILAMP) are hydrophobic.

Functionally, required for the formation of sulfated nod factor. Proposed to transfer activated sulfate (PAPS) to a N-acetylglucosamine of the nod factor. In Rhizobium meliloti (strain 1021) (Ensifer meliloti), this protein is Nodulation protein H (nodH).